A 309-amino-acid chain; its full sequence is uncharacterized protein (309 aa).

Solcar repeat units lie at residues 6-83 (SDLY…LCHS), 97-211 (LTGY…FKRL), and 216-302 (NDKA…VSLL). Helical transmembrane passes span 12 to 32 (ITAG…FEYL), 47 to 67 (IILP…VAAF), 100 to 120 (YNLL…IIPF), 184 to 204 (VQGT…QFTA), 222 to 242 (VITG…IDVV), and 285 to 305 (VGIS…LLGF).

Belongs to the mitochondrial carrier (TC 2.A.29) family.

The protein resides in the mitochondrion inner membrane. This is an uncharacterized protein from Saccharomyces cerevisiae (strain ATCC 204508 / S288c) (Baker's yeast).